Consider the following 467-residue polypeptide: Gustatory and odorant receptor 22 (467 aa).

Over 1-106 (MIHTQMEDAQ…MPRTTFTWCS (106 aa)) the chain is Cytoplasmic. A helical transmembrane segment spans residues 107 to 127 (KAFLWAYFIYACETVIVLVVA). Topologically, residues 128-144 (RERINKFISTSDKRFDE) are extracellular. Residues 145–165 (VIYNIIFMSIMVPHFLLPVAS) form a helical membrane-spanning segment. At 166–198 (WRNGSEVAKFKNMWTDFQYKYLIVTGKPIVFPK) the chain is on the cytoplasmic side. A helical transmembrane segment spans residues 199-219 (LYPITWTLCIVSWSLSLVIIL). At 220–238 (SQYYLQPDFQFCHTFAYYH) the chain is on the extracellular side. A helical membrane pass occupies residues 239–259 (IIAMLNGFCSLWFVNCTAFGT). Residues 260 to 304 (ASKAFAKELTDVLATERPAAKLTEYRHLWVDLSHMMQQLGKAYSN) are Cytoplasmic-facing. Residues 305–325 (MYGIYCLVIFFTTIIATYGSL) traverse the membrane as a helical segment. Topologically, residues 326–337 (SEIIEHGATYKE) are extracellular. Residues 338 to 358 (VGLFVIVFYCMSLLFIICNEA) traverse the membrane as a helical segment. The Cytoplasmic segment spans residues 359 to 414 (HHASKRVGLNFQERLLNVNLTAVDKATQKEVEMFLVAIDKNPPTMNLDGYANINRG). The helical transmembrane segment at 415 to 435 (LITSNISFMATYLVVLMQFKL) threads the bilayer. Residues 436 to 467 (TLLRQSAKNAFISALKANLSRIRSLDADKVNT) lie on the Extracellular side of the membrane. A glycan (N-linked (GlcNAc...) asparagine) is linked at Asn-453.

The protein belongs to the insect chemoreceptor superfamily. Gustatory receptor (GR) family. Gr21a subfamily. Carbon dioxide-responsive neurons coexpress GPRgr22 and GPRgr24 in the maxillary palp at both larval and adult life stages.

It localises to the cell membrane. Functionally, gustatory receptor which mediates acceptance or avoidance behavior, depending on its substrates. GPRgr22 and GPRgr24 together are sufficient for olfactory carbon dioxide-chemosensation. In Anopheles gambiae (African malaria mosquito), this protein is Gustatory and odorant receptor 22.